A 33-amino-acid polypeptide reads, in one-letter code: Mytimycin (33 aa).

The protein resides in the secreted. In terms of biological role, has antifungal activity against N.crassa and F.culmorum. The sequence is that of Mytimycin from Mytilus edulis (Blue mussel).